A 393-amino-acid polypeptide reads, in one-letter code: Elongation factor Tu (393 aa).

A tr-type G domain is found at 10–202 (KPHVNIGTIG…AVDEYIPTPE (193 aa)). A G1 region spans residues 19-26 (GHVDHGKT). Position 19–26 (19–26 (GHVDHGKT)) interacts with GTP. Residue Thr-26 coordinates Mg(2+). The segment at 60–64 (GITIN) is G2. Positions 81 to 84 (DCPG) are G3. GTP is bound by residues 81-85 (DCPGH) and 136-139 (NKAD). Residues 136–139 (NKAD) form a G4 region. The G5 stretch occupies residues 174–176 (SAL).

Belongs to the TRAFAC class translation factor GTPase superfamily. Classic translation factor GTPase family. EF-Tu/EF-1A subfamily. Monomer.

The protein resides in the cytoplasm. It carries out the reaction GTP + H2O = GDP + phosphate + H(+). Its function is as follows. GTP hydrolase that promotes the GTP-dependent binding of aminoacyl-tRNA to the A-site of ribosomes during protein biosynthesis. This Clostridium novyi (strain NT) protein is Elongation factor Tu.